Reading from the N-terminus, the 133-residue chain is ATP synthase epsilon chain (133 aa).

The tract at residues 103 to 133 is disordered; that stretch reads VSQMEGQEPSTEKIKAQQNFNRARARVQATK.

Belongs to the ATPase epsilon chain family. F-type ATPases have 2 components, CF(1) - the catalytic core - and CF(0) - the membrane proton channel. CF(1) has five subunits: alpha(3), beta(3), gamma(1), delta(1), epsilon(1). CF(0) has three main subunits: a, b and c.

The protein localises to the cellular thylakoid membrane. Its function is as follows. Produces ATP from ADP in the presence of a proton gradient across the membrane. In Prochlorococcus marinus (strain MIT 9313), this protein is ATP synthase epsilon chain.